The chain runs to 353 residues: Nucleotide-binding protein sce5766 (353 aa).

Position 27–34 (27–34 (GLSGAGKS)) interacts with ATP. 76-79 (DVRV) lines the GTP pocket. Residues 310–353 (SGVPSGVGEGMAGAPGVDLRLAQPGATPSEPRPASDTSVTGGER) are disordered. Over residues 344–353 (SDTSVTGGER) the composition is skewed to polar residues.

The protein belongs to the RapZ-like family.

Functionally, displays ATPase and GTPase activities. This Sorangium cellulosum (strain So ce56) (Polyangium cellulosum (strain So ce56)) protein is Nucleotide-binding protein sce5766.